We begin with the raw amino-acid sequence, 908 residues long: Flap endonuclease GEN homolog 1 (908 aa).

The XPG-N domain stretch occupies residues 2 to 96 (GVNDLWQILE…SKRTQTRYGP (95 aa)). The Mg(2+) site is built by Asp-30, Glu-75, Glu-134, Glu-136, Asp-155, Asp-157, and Asp-208. The tract at residues 122-208 (ECLGMPWVQA…VGLAVLLGCD (87 aa)) is XPG-I domain. Residues 208 to 383 (DYLPKGVPGV…LLVLLTRYDM (176 aa)) are 5'-3' exonuclease domain. The segment at 389–463 (GRKTSNQLQP…VYQKQLSETK (75 aa)) is chromodomain. Disordered stretches follow at residues 460–482 (SETKGRKQKSMKNKPKGSHLPEA), 629–650 (YESEQGTSDSEGSGRDLQQSNP), 792–834 (RDSS…NKLR), and 853–886 (AEDEENGFSDLGRSPQSFRPCHDKDENSTASWEN). Over residues 465–476 (RKQKSMKNKPKG) the composition is skewed to basic residues. Ser-794 and Ser-795 each carry phosphoserine. A compositionally biased stretch (basic and acidic residues) spans 824–834 (HVRDSTHNKLR).

Belongs to the XPG/RAD2 endonuclease family. GEN subfamily. In terms of assembly, largely monomeric, dimerizes on the Holliday junction and the first nick occurs upon dimerization at the junction. Mg(2+) serves as cofactor. As to expression, expressed in bone marrow and testis and to a lesser extent in thymus, spleen, brain and colon.

The protein localises to the nucleus. Endonuclease which resolves Holliday junctions (HJs) by the introduction of symmetrically related cuts across the junction point, to produce nicked duplex products in which the nicks can be readily ligated. Four-way DNA intermediates, also known as Holliday junctions, are formed during homologous recombination and DNA repair, and their resolution is necessary for proper chromosome segregation. Cleaves HJs by a nick and counter-nick mechanism involving dual coordinated incisions that lead to the formation of ligatable nicked duplex products. Cleavage of the first strand is rate limiting, while second strand cleavage is rapid. Largely monomeric, dimerizes on the HJ and the first nick occurs upon dimerization at the junction. Efficiently cleaves both single and double HJs contained within large recombination intermediates. Exhibits a weak sequence preference for incision between two G residues that reside in a T-rich region of DNA. Also has endonuclease activity on 5'-flap and replication fork (RF) DNA substrates. This chain is Flap endonuclease GEN homolog 1 (Gen1), found in Mus musculus (Mouse).